Here is a 482-residue protein sequence, read N- to C-terminus: Ribosomal RNA small subunit methyltransferase F (482 aa).

S-adenosyl-L-methionine contacts are provided by residues A119 to K125, E143, D170, and D188. Catalysis depends on C241, which acts as the Nucleophile.

It belongs to the class I-like SAM-binding methyltransferase superfamily. RsmB/NOP family.

The protein resides in the cytoplasm. The enzyme catalyses cytidine(1407) in 16S rRNA + S-adenosyl-L-methionine = 5-methylcytidine(1407) in 16S rRNA + S-adenosyl-L-homocysteine + H(+). Functionally, specifically methylates the cytosine at position 1407 (m5C1407) of 16S rRNA. The polypeptide is Ribosomal RNA small subunit methyltransferase F (Shewanella sp. (strain MR-7)).